A 178-amino-acid chain; its full sequence is CD209 antigen-like protein C (178 aa).

Residues Cys-48 and Cys-59 are joined by a disulfide bond. In terms of domain architecture, C-type lectin spans 54–169 (VFQGNCYFFS…CTIKKYWICK (116 aa)). Asn-70 is a glycosylation site (N-linked (GlcNAc...) asparagine). 2 disulfide bridges follow: Cys-76–Cys-168 and Cys-147–Cys-160. Ca(2+) contacts are provided by Glu-138, Asn-140, Glu-145, Asn-156, and Asp-157.

In terms of biological role, probable pathogen-recognition receptor. May recognize in a calcium-dependent manner high mannose N-linked oligosaccharides in a variety of pathogen antigens. The chain is CD209 antigen-like protein C (Cd209c) from Mus musculus (Mouse).